We begin with the raw amino-acid sequence, 231 residues long: ABC transporter ATP-binding protein YtrE (231 aa).

The ABC transporter domain occupies 4-231; that stretch reads VQHIDHSFTI…VLKGGITVEV (228 aa). 42–49 contacts ATP; that stretch reads GRSGSGKS.

This sequence belongs to the ABC transporter superfamily. In terms of assembly, the complex is composed of 2 ATP-binding proteins (YtrB and YtrE), 2 transmembrane proteins (YtrC and YtrD) and a solute-binding protein (YtrF).

Its subcellular location is the cell membrane. Functionally, part of the ABC transporter complex YtrBCDEF that plays a role in acetoin utilization during stationary phase and sporulation. The chain is ABC transporter ATP-binding protein YtrE (ytrE) from Bacillus subtilis (strain 168).